Reading from the N-terminus, the 213-residue chain is Protein-L-isoaspartate O-methyltransferase 1 (213 aa).

Serine 64 is a catalytic residue.

This sequence belongs to the methyltransferase superfamily. L-isoaspartyl/D-aspartyl protein methyltransferase family.

It localises to the cytoplasm. It catalyses the reaction [protein]-L-isoaspartate + S-adenosyl-L-methionine = [protein]-L-isoaspartate alpha-methyl ester + S-adenosyl-L-homocysteine. Catalyzes the methyl esterification of L-isoaspartyl residues in peptides and proteins that result from spontaneous decomposition of normal L-aspartyl and L-asparaginyl residues. It plays a role in the repair and/or degradation of damaged proteins. The protein is Protein-L-isoaspartate O-methyltransferase 1 of Nitrosococcus oceani (strain ATCC 19707 / BCRC 17464 / JCM 30415 / NCIMB 11848 / C-107).